The following is a 644-amino-acid chain: Exoribonuclease 2 (644 aa).

An RNB domain is found at 189-516; it reads RQDLTALNFV…NHRLLKAVIK (328 aa). The region spanning 561-643 is the S1 motif domain; it reads DTRFAAEIID…DTRSIIARPA (83 aa).

The protein belongs to the RNR ribonuclease family. RNase II subfamily.

The protein localises to the cytoplasm. The enzyme catalyses Exonucleolytic cleavage in the 3'- to 5'-direction to yield nucleoside 5'-phosphates.. Involved in mRNA degradation. Hydrolyzes single-stranded polyribonucleotides processively in the 3' to 5' direction. This is Exoribonuclease 2 from Salmonella arizonae (strain ATCC BAA-731 / CDC346-86 / RSK2980).